A 357-amino-acid polypeptide reads, in one-letter code: Phosphoribosylformylglycinamidine cyclo-ligase (357 aa).

It belongs to the AIR synthase family.

It is found in the cytoplasm. The enzyme catalyses 2-formamido-N(1)-(5-O-phospho-beta-D-ribosyl)acetamidine + ATP = 5-amino-1-(5-phospho-beta-D-ribosyl)imidazole + ADP + phosphate + H(+). The protein operates within purine metabolism; IMP biosynthesis via de novo pathway; 5-amino-1-(5-phospho-D-ribosyl)imidazole from N(2)-formyl-N(1)-(5-phospho-D-ribosyl)glycinamide: step 2/2. The polypeptide is Phosphoribosylformylglycinamidine cyclo-ligase (Nitrobacter winogradskyi (strain ATCC 25391 / DSM 10237 / CIP 104748 / NCIMB 11846 / Nb-255)).